We begin with the raw amino-acid sequence, 533 residues long: Di/tripeptide-binding protein 3 (533 aa).

The first 24 residues, 1-24, serve as a signal peptide directing secretion; it reads MRKILPLRAWLAAGLILGSPFSHA.

The protein belongs to the bacterial solute-binding protein 5 family. As to quaternary structure, the complex is composed of two ATP-binding proteins (DppD and DppF), two transmembrane proteins (DppB and DppC) and a solute-binding protein (DppA3). Five orthologous SBPs (DppA1-A5) are present in P.aeruginosa, which increases the substrate specificity of the DppBCDF transporter.

Part of the ABC transporter DppABCDF involved in the uptake of various di/tripeptides. Prefers dipeptides with acidic residues at the C-terminal end. Involved in the uptake of phaseolotoxin, a toxic tripeptide inhibiting the enzyme ornithine carbamoyltransferase. The protein is Di/tripeptide-binding protein 3 of Pseudomonas aeruginosa (strain UCBPP-PA14).